A 2422-amino-acid polypeptide reads, in one-letter code: Non-reducing polyketide synthase trt4 (2422 aa).

Residues 14 to 196 are N-terminal acylcarrier protein transacylase domain (SAT); it reads VLFGPKCPKT…HHSDHTSVVQ (183 aa). Positions 289 to 314 are disordered; sequence VEPPDSHHNTNTTQDSDVTTNASPLT. The span at 297–312 shows a compositional bias: polar residues; that stretch reads NTNTTQDSDVTTNASP. The Ketosynthase family 3 (KS3) domain occupies 329–745; that stretch reads TVPIAVTGMA…GSNAAIVLQE (417 aa). Active-site for beta-ketoacyl synthase activity residues include cysteine 494, histidine 629, and histidine 668. Residues 856–1121 form a malonyl-CoA:ACP transacylase (MAT) domain region; sequence LCFGGQTGNT…CPIDLSGPQA (266 aa). Serine 904 functions as the For acyl/malonyl transferase activity in the catalytic mechanism. The tract at residues 1190–1316 is N-terminal hotdog fold; the sequence is PSLVKLLNND…GKISISSEAN (127 aa). The PKS/mFAS DH domain maps to 1190-1495; that stretch reads PSLVKLLNND…FTCVSIQSLK (306 aa). Positions 1191–1494 are product template (PT) domain; the sequence is SLVKLLNNDG…TFTCVSIQSL (304 aa). The active-site Proton acceptor; for dehydratase activity is the histidine 1221. The segment at 1345–1495 is C-terminal hotdog fold; the sequence is SSGLKRSTVY…FTCVSIQSLK (151 aa). Aspartate 1402 (proton donor; for dehydratase activity) is an active-site residue. In terms of domain architecture, Carrier spans 1535–1612; that stretch reads SRSEDGLRVV…GLVQRIFPGG (78 aa). Position 1572 is an O-(pantetheine 4'-phosphoryl)serine (serine 1572). Positions 1615–1636 are disordered; sequence AHVETHSQPPDKIGITTGDRMP. Positions 1774 to 2007 are methyltransferase (CMeT) domain; sequence QHASEHKLLH…GFNWVDWTDN (234 aa). The tract at residues 2036-2383 is thioesterase (TE) domain; that stretch reads NAVAEETLVY…LAPHIPTDEY (348 aa). Active-site for thioesterase activity residues include serine 2159, aspartate 2320, and histidine 2352.

The catalysed reaction is 3 malonyl-CoA + acetyl-CoA + 2 S-adenosyl-L-methionine = 3,5-dimethylorsellinate + 2 S-adenosyl-L-homocysteine + 3 CO2 + 4 CoA. It participates in secondary metabolite biosynthesis; terpenoid biosynthesis. Its function is as follows. Non-reducing polyketide synthase; part of the gene cluster that mediates the biosynthesis of terretonin, a fungal meroterpenoid that acts as a mycotoxin. The first step of the pathway is the synthesis of 3,5-dimethylorsellinic acid (DMOA) by the polyketide synthase trt4. DMOA is then prenylated into farnesyl-DMOA by the polyprenyl transferase trt2. Methylation by the methyltransferase trt5 then leads to farnesyl-DMOA methyl ester which is further subject to epoxidation by the FAD-dependent monooxygenase trt8 to yield epoxyfarnesyl-DMOA methyl ester. Cyclization of epoxyfarnesyl-DMOA methyl ester by the terpene cyclase trt1 leads to a tetracycle intermediate which is in turn converted to preterretonin. Dehydrogenase trt9 comes next to transform preterretonin to preterrenoid. The FAD-dependent monooxygenase trt3 is then required for the C-hydroxylation at C16 of preterrenoid to yield terrenoid. The cytochrome P450 trt6 catalyzes three successive oxidations to transform terrenoid into an unstable intermediate, which then undergoes the D-ring expansion and unusual rearrangement of the methoxy group to afford the core skeleton of terretonin. Trt14 catalyzes the D-ring expansion of terretonin involving intramolecular methoxy rearrangement as well as the hydrolysis of the expanded D-ring and the methyl ester moiety. Finally, the nonheme iron-dependent dioxygenase trt7 accomplishes the last two oxidation reactions steps to complete the biosynthesis of terretonin. Terretonin C is produced via spontaneous decarboxylation of the terretonin precursor. Another shunt product of the terretonin biosynthesis is dihydrofarnesyl-DMOA, derived from epoxyfarnesyl-DMOA through hydrolysis of the epoxide. In Aspergillus terreus (strain NIH 2624 / FGSC A1156), this protein is Non-reducing polyketide synthase trt4.